The sequence spans 695 residues: NADPH--cytochrome P450 reductase (695 aa).

At 1-8 (MAQLDTLD) the chain is on the lumenal side. A helical transmembrane segment spans residues 9–31 (LVVLVALLVGSVAYFTKGTYWAV). Residues 32 to 695 (AKDPYASSGP…SGSYQEDVWS (664 aa)) lie on the Cytoplasmic side of the membrane. Residues 66 to 221 (CVIFYGSQTG…DFLAWKEPMW (156 aa)) enclose the Flavodoxin-like domain. Residues 72–77 (SQTGTA), 123–126 (ATYG), 169–178 (LGNNTYEHYN), and D204 contribute to the FMN site. Residues 277-538 (HNPFIAPIVE…HVRHSNFKLP (262 aa)) enclose the FAD-binding FR-type domain. R296 is an NADP(+) binding site. Residues 451-454 (RYYS), 469-471 (TAV), and 486-489 (GVTT) contribute to the FAD site. NADP(+) contacts are provided by residues T552, 614-615 (SR), 620-624 (KVYVQ), and E656. W694 is a binding site for FAD.

Belongs to the NADPH--cytochrome P450 reductase family. The protein in the N-terminal section; belongs to the flavodoxin family. This sequence in the C-terminal section; belongs to the flavoprotein pyridine nucleotide cytochrome reductase family. It depends on FAD as a cofactor. The cofactor is FMN.

It localises to the endoplasmic reticulum membrane. It is found in the mitochondrion outer membrane. The protein resides in the cell membrane. It carries out the reaction 2 oxidized [cytochrome P450] + NADPH = 2 reduced [cytochrome P450] + NADP(+) + H(+). Functionally, this enzyme is required for electron transfer from NADP to cytochrome P450 in microsomes. It can also provide electron transfer to heme oxygenase and cytochrome B5. Involved in ergosterol biosynthesis. The polypeptide is NADPH--cytochrome P450 reductase (Aspergillus oryzae (strain ATCC 42149 / RIB 40) (Yellow koji mold)).